The primary structure comprises 371 residues: Protein STRICTOSIDINE SYNTHASE-LIKE 7 (371 aa).

The N-terminal stretch at 1–25 (MPVLFSSRSLILSIIVPLLISIALY) is a signal peptide. N-linked (GlcNAc...) asparagine glycans are attached at residues Asn-101, Asn-137, and Asn-285. Tyr-303 is subject to Phosphotyrosine.

The protein belongs to the strictosidine synthase family.

It localises to the vacuole. The sequence is that of Protein STRICTOSIDINE SYNTHASE-LIKE 7 from Arabidopsis thaliana (Mouse-ear cress).